Reading from the N-terminus, the 456-residue chain is MDEIQEPLALTVHLLADTGNGLLLQQALDQLLECICPEVRLFLVSERARPVNYHEKYHPRRARFPGMSVLLFLQESLGQERLFRVLDFLRRSPWQGFPTQHAQGRSCSYLPANQEFYSLHNQMPVWGMRPVNCGTDILRVTLYCSFDNYEDAIRLYEMLLQRDATVQKSDFCFFVLYATEGFSLQLSLKQLPLGMSVDPKESSVLQFRVQEIGQLVPLLPNPCVPISSARWQTQDYDGNKILLQVHPKPGVGIKNGEHPFLNGCLRGDTHPQDSSLNSVSTQRTLEPRSRRRSRSRRFKVHSLELPQPSGSWENSTDPLWRRLGWSTLADSSASGMQQRRLSIPIEPKMGRNVLREDGFEKLEAETNVDTGFTIINSEPRRSFPSRFPRDFQSSQPPRCLSGSSLEVTVSPNQGVFKDRLHPLSLPSQRDFGAKKVISKCSHHLQAQGEEKEEFFI.

The tract at residues Asn-262–Glu-313 is disordered. Polar residues predominate over residues Gln-272–Thr-284. Positions Ser-289 to Val-300 are enriched in basic residues.

It belongs to the FAM124 family. Interacts with CHD7 and CHD8. Expressed strongly in lung, at slightly lower levels in heart, kidney, brain and testis, and weakly in liver (at protein level). In brain, highly expressed in cortex, hippocampus, dentate gyrus, caudate putamen and cerebellum (at protein level).

The protein resides in the nucleus. The sequence is that of Protein FAM124B (Fam124b) from Mus musculus (Mouse).